Reading from the N-terminus, the 316-residue chain is Methionyl-tRNA formyltransferase (316 aa).

A (6S)-5,6,7,8-tetrahydrofolate-binding site is contributed by 109–112; it reads SLLP.

Belongs to the Fmt family.

The catalysed reaction is L-methionyl-tRNA(fMet) + (6R)-10-formyltetrahydrofolate = N-formyl-L-methionyl-tRNA(fMet) + (6S)-5,6,7,8-tetrahydrofolate + H(+). Its function is as follows. Attaches a formyl group to the free amino group of methionyl-tRNA(fMet). The formyl group appears to play a dual role in the initiator identity of N-formylmethionyl-tRNA by promoting its recognition by IF2 and preventing the misappropriation of this tRNA by the elongation apparatus. The protein is Methionyl-tRNA formyltransferase of Idiomarina loihiensis (strain ATCC BAA-735 / DSM 15497 / L2-TR).